Here is a 331-residue protein sequence, read N- to C-terminus: 5-dehydro-2-deoxygluconokinase (331 aa).

Belongs to the carbohydrate kinase PfkB family.

It carries out the reaction 5-dehydro-2-deoxy-D-gluconate + ATP = 6-phospho-5-dehydro-2-deoxy-D-gluconate + ADP + H(+). Its pathway is polyol metabolism; myo-inositol degradation into acetyl-CoA; acetyl-CoA from myo-inositol: step 5/7. Catalyzes the phosphorylation of 5-dehydro-2-deoxy-D-gluconate (2-deoxy-5-keto-D-gluconate or DKG) to 6-phospho-5-dehydro-2-deoxy-D-gluconate (DKGP). The polypeptide is 5-dehydro-2-deoxygluconokinase (Halalkalibacterium halodurans (strain ATCC BAA-125 / DSM 18197 / FERM 7344 / JCM 9153 / C-125) (Bacillus halodurans)).